The sequence spans 389 residues: Succinyl-diaminopimelate desuccinylase (389 aa).

Histidine 72 is a Zn(2+) binding site. Residue aspartate 74 is part of the active site. Aspartate 105 contacts Zn(2+). Residue glutamate 144 is the Proton acceptor of the active site. Glutamate 145, glutamate 173, and histidine 362 together coordinate Zn(2+).

The protein belongs to the peptidase M20A family. DapE subfamily. Homodimer. It depends on Zn(2+) as a cofactor. The cofactor is Co(2+).

It carries out the reaction N-succinyl-(2S,6S)-2,6-diaminopimelate + H2O = (2S,6S)-2,6-diaminopimelate + succinate. It functions in the pathway amino-acid biosynthesis; L-lysine biosynthesis via DAP pathway; LL-2,6-diaminopimelate from (S)-tetrahydrodipicolinate (succinylase route): step 3/3. In terms of biological role, catalyzes the hydrolysis of N-succinyl-L,L-diaminopimelic acid (SDAP), forming succinate and LL-2,6-diaminopimelate (DAP), an intermediate involved in the bacterial biosynthesis of lysine and meso-diaminopimelic acid, an essential component of bacterial cell walls. This chain is Succinyl-diaminopimelate desuccinylase, found in Rhodopseudomonas palustris (strain HaA2).